The sequence spans 849 residues: Serine/threonine-protein phosphatase 4 regulatory subunit 3B (849 aa).

A WH1 domain is found at 1 to 100 (MSDTRRRVKV…DEIWEKICQV (100 aa)). Residues serine 117 and serine 695 each carry the phosphoserine modification. Residues 714 to 724 (EMWFNEDEEEE) show a composition bias toward acidic residues. The tract at residues 714 to 849 (EMWFNEDEEE…SPRKRPRLGS (136 aa)) is disordered. Residues 733–764 (EKPKPEDDFPDNYEKFMETKKAKESEDKENLP) show a composition bias toward basic and acidic residues. Residues 776–818 (FSHSASAANGTNSKSVVAQIPPATSNGSSSKTTNLPTSVTATK) show a composition bias toward polar residues. Positions 827–838 (YPDDEEEDEEEE) are enriched in acidic residues. Serine 840 is subject to Phosphoserine.

It belongs to the SMEK family. Serine/threonine-protein phosphatase 4 (PP4) occurs in different assemblies of the catalytic and one or more regulatory subunits. Component of the PP4 complex PPP4C-PPP4R2-PPP4R3B. In terms of tissue distribution, moderately expressed in tissues and specific brain regions examined.

Its subcellular location is the cytoplasm. The protein localises to the cytoskeleton. It localises to the microtubule organizing center. It is found in the centrosome. The protein resides in the nucleus. In terms of biological role, regulatory subunit of serine/threonine-protein phosphatase 4 (PP4). May regulate the activity of PPP4C at centrosomal microtubule organizing centers. The sequence is that of Serine/threonine-protein phosphatase 4 regulatory subunit 3B from Homo sapiens (Human).